The following is a 239-amino-acid chain: Putative ABC transporter ATP-binding protein AlbC (239 aa).

The 235-residue stretch at leucine 4–histidine 238 folds into the ABC transporter domain. Position 37–44 (glycine 37–threonine 44) interacts with ATP.

The protein belongs to the ABC transporter superfamily.

Functionally, involved in the production of the bacteriocin subtilosin. Required for immunity to subtilosin. This Bacillus subtilis (strain 168) protein is Putative ABC transporter ATP-binding protein AlbC (albC).